A 726-amino-acid polypeptide reads, in one-letter code: L-lysine 6-oxidase (726 aa).

Residues 516-581 (CTIQTVNFSE…LPPAYYSYWW (66 aa)) constitute a cross-link (4'-cysteinyl-tryptophylquinone (Cys-Trp)). Tryptophylquinone is present on Trp-581.

As to quaternary structure, homotetramer. It depends on cysteine tryptophylquinone residue as a cofactor. The cysteine tryptophylquinone (CTQ) is generated by oxidation of the indole ring of a tryptophan residue to form tryptophylquinone, followed by covalent cross-linking with a cysteine residue.

It is found in the secreted. The catalysed reaction is L-lysine + O2 + H2O = (S)-2-amino-6-oxohexanoate + H2O2 + NH4(+). With respect to regulation, inhibited by aminoguanidine, amiloride and beta-aminopropionitrile. Functionally, has antibacterial activity against a wide spectrum of Gram-positive and Gram-negative bacteria including nosocomial isolates of S.aureus and Pseudomonas sp. The antimicrobial activity is due to hydrogen peroxide generated by its lysine oxidase activity. Also has autotoxic activity. Involved in biofilm differentiation; responsible for cell death within microcolonies during biofilm development which is linked to the generation of a phenotypically diverse dispersal population and thus may play a role in colonization. In Marinomonas mediterranea (strain ATCC 700492 / JCM 21426 / NBRC 103028 / MMB-1), this protein is L-lysine 6-oxidase (lodA).